Here is a 925-residue protein sequence, read N- to C-terminus: ETO1-like protein 2 (925 aa).

A BTB domain is found at 207-307; the sequence is SDISFCVGSE…ECEARLAASV (101 aa). The TPR 1 repeat unit spans residues 409 to 442; it reads ALSLHQMGCVLFERKDYKAAQFHFRLASSLGHVY. The stretch at 509–533 forms a coiled coil; sequence KYRAVMKFEQKQIKEAFQEIDRLIQ. 6 TPR repeats span residues 538–571, 664–697, 738–771, 773–803, 834–867, and 869–900; these read PECL…EPNY, AERL…QRSF, GQAL…KHIR, RQGL…SCSK, TYPY…RPEL, and TLHL…DPNH.

The protein belongs to the ETO1 family. As to quaternary structure, interacts with the C-terminal domain of ACS5. Constitutively expressed in green and etiolated seedlings.

The protein operates within protein modification; protein ubiquitination. Functionally, potential regulator of the ethylene pathway, which acts by regulating the stability of 1-aminocyclopropane-1-carboxylate synthase (ACS) enzymes. May act as a substrate-specific adapter that connects ACS enzymes, such as ACS5, to ubiquitin ligase complexes, leading to proteasomal degradation of ACS enzymes. This is ETO1-like protein 2 (EOL2) from Arabidopsis thaliana (Mouse-ear cress).